A 786-amino-acid chain; its full sequence is MKGTGIMDCAPKALLARALYDNCPDCSDELAFSRGDILTILEQHVPESEGWWKCLLHGRQGLAPANRLQILTEVAADRPCPPFLRGLEEAPASSEETYQVPTLPRPPTPGPVYEQMRSWAEGPQPPTAQVYEFPDPPTSARIICEKTLSFPKQAILTLPRPVRASLPTLPSQVYDVPTQHRGPVVLKEPEKQQLYDIPASPKKAGLHPPDSQASGQGVPLISVTTLRRGGYSTLPNPQKSEWIYDTPVSPGKASVRNTPLTSFAEESRPHALPSSSSTFYNPPSGRSRSLTPQLNNNVPMQKKLSLPEIPSYGFLVPRGTFPLDEDVSYKVPSSFLIPRVEQQNTKPNIYDIPKATSSVSQAGKELEKAKEVSENSAGHNSSWFSRRTTSPSPEPDRLSGSSSDSRASIVSSCSTTSTDDSSSSSSEESAKELSLDLDVAKETVMALQHKVVSSVAGLMLFVSRKWRFRDYLEANIDAIHRSTDHIEESVREFLDFARGVHGTACNLTDSNLQNRIRDQMQTISNSYRILLETKESLDNRNWPLEVLVTDSVQNSPDDLERFVMVARMLPEDIKRFASIVIANGRLLFKRNCEKEETVQLTPNAEFKCEKYIQPPQRETESHQKSTPSTKQREDEHSSELLKKNRANICGQNPGPLIPQPSSQQTPERKPRLSEHCRLYFGALFKAISAFHGSLSSSQPAEIITQSKLVIMVGQKLVDTLCMETQERDVRNEILRGSSHLCSLLKDVALATKNAVLTYPSPAALGHLQAEAEKLEQHTRQFRGTLG.

In terms of domain architecture, SH3 spans 11 to 73 (PKALLARALY…PANRLQILTE (63 aa)). Serine 200 and serine 249 each carry phosphoserine. The segment at 262–295 (SFAEESRPHALPSSSSTFYNPPSGRSRSLTPQLN) is disordered. The span at 273-295 (PSSSSTFYNPPSGRSRSLTPQLN) shows a compositional bias: polar residues. Serine 305 carries the phosphoserine modification. 2 disordered regions span residues 361-429 (QAGK…SEES) and 612-670 (IQPP…ERKP). Basic and acidic residues predominate over residues 364–373 (KELEKAKEVS). The segment covering 374–391 (ENSAGHNSSWFSRRTTSP) has biased composition (polar residues). Phosphoserine is present on residues serine 376 and serine 390. Low complexity predominate over residues 399–427 (SGSSSDSRASIVSSCSTTSTDDSSSSSSE). Basic and acidic residues predominate over residues 630 to 642 (KQREDEHSSELLK).

Belongs to the CAS family. In terms of assembly, interacts (via SH3 domain) with PTK2/FAK1 (via C-terminus). Phosphorylated on tyrosines by SRC. Expressed abundantly in lung and spleen. Also highly expressed in ovarian and leukemia cell lines.

The protein localises to the cytoplasm. Its subcellular location is the cytoskeleton. The protein resides in the cell junction. It localises to the focal adhesion. Its function is as follows. Docking protein that plays a role in tyrosine kinase-based signaling related to cell adhesion and cell spreading. Regulates PTK2/FAK1 activity, focal adhesion integrity, and cell spreading. This chain is Cas scaffolding protein family member 4 (CASS4), found in Homo sapiens (Human).